We begin with the raw amino-acid sequence, 351 residues long: DNA-directed RNA polymerase subunit alpha (351 aa).

The tract at residues 1–245 is alpha N-terminal domain (alpha-NTD); that stretch reads MPRRNLLKGF…EHFTVFVNFD (245 aa). The interval 261–351 is alpha C-terminal domain (alpha-CTD); sequence AVLELLNTKI…MRQKEEIDEA (91 aa).

It belongs to the RNA polymerase alpha chain family. As to quaternary structure, homodimer. The RNAP catalytic core consists of 2 alpha, 1 beta, 1 beta' and 1 omega subunit. When a sigma factor is associated with the core the holoenzyme is formed, which can initiate transcription.

It carries out the reaction RNA(n) + a ribonucleoside 5'-triphosphate = RNA(n+1) + diphosphate. Its function is as follows. DNA-dependent RNA polymerase catalyzes the transcription of DNA into RNA using the four ribonucleoside triphosphates as substrates. In Treponema pallidum (strain Nichols), this protein is DNA-directed RNA polymerase subunit alpha.